Reading from the N-terminus, the 105-residue chain is Large ribosomal subunit protein uL24 (105 aa).

The protein belongs to the universal ribosomal protein uL24 family. In terms of assembly, part of the 50S ribosomal subunit.

In terms of biological role, one of two assembly initiator proteins, it binds directly to the 5'-end of the 23S rRNA, where it nucleates assembly of the 50S subunit. Functionally, one of the proteins that surrounds the polypeptide exit tunnel on the outside of the subunit. In Xanthobacter autotrophicus (strain ATCC BAA-1158 / Py2), this protein is Large ribosomal subunit protein uL24.